We begin with the raw amino-acid sequence, 450 residues long: Methylenetetrahydrofolate--tRNA-(uracil-5-)-methyltransferase TrmFO (450 aa).

Position 9-14 (9-14 (GGGMAG)) interacts with FAD.

This sequence belongs to the MnmG family. TrmFO subfamily. Requires FAD as cofactor.

It is found in the cytoplasm. It catalyses the reaction uridine(54) in tRNA + (6R)-5,10-methylene-5,6,7,8-tetrahydrofolate + NADH + H(+) = 5-methyluridine(54) in tRNA + (6S)-5,6,7,8-tetrahydrofolate + NAD(+). The enzyme catalyses uridine(54) in tRNA + (6R)-5,10-methylene-5,6,7,8-tetrahydrofolate + NADPH + H(+) = 5-methyluridine(54) in tRNA + (6S)-5,6,7,8-tetrahydrofolate + NADP(+). Functionally, catalyzes the folate-dependent formation of 5-methyl-uridine at position 54 (M-5-U54) in all tRNAs. The sequence is that of Methylenetetrahydrofolate--tRNA-(uracil-5-)-methyltransferase TrmFO from Roseobacter denitrificans (strain ATCC 33942 / OCh 114) (Erythrobacter sp. (strain OCh 114)).